The following is a 528-amino-acid chain: Benzoylformate decarboxylase (528 aa).

2 residues coordinate Mg(2+): Gln117 and Leu118. The thiamine pyrophosphate binding stretch occupies residues 377-460; it reads TSTVTAFWQR…IILKNGTYGA (84 aa). Ca(2+) is bound by residues Asp428, Asn455, and Thr457.

Belongs to the TPP enzyme family. Homotetramer. The cofactor is Ca(2+). Requires thiamine diphosphate as cofactor. Mg(2+) is required as a cofactor.

It carries out the reaction phenylglyoxylate + H(+) = benzaldehyde + CO2. Its pathway is aromatic compound metabolism; (R)-mandelate degradation; benzoate from (R)-mandelate: step 3/4. This is Benzoylformate decarboxylase (mdlC) from Pseudomonas aeruginosa (strain ATCC 15692 / DSM 22644 / CIP 104116 / JCM 14847 / LMG 12228 / 1C / PRS 101 / PAO1).